Consider the following 177-residue polypeptide: Large ribosomal subunit protein uL6 (177 aa).

Basic and acidic residues predominate over residues 152–171; the sequence is RPPEPYKGKGVRYDDEEVRR. A disordered region spans residues 152–177; it reads RPPEPYKGKGVRYDDEEVRRKEAKKK.

It belongs to the universal ribosomal protein uL6 family. Part of the 50S ribosomal subunit.

Its function is as follows. This protein binds to the 23S rRNA, and is important in its secondary structure. It is located near the subunit interface in the base of the L7/L12 stalk, and near the tRNA binding site of the peptidyltransferase center. In Shewanella sp. (strain MR-4), this protein is Large ribosomal subunit protein uL6.